Consider the following 71-residue polypeptide: Protein CYSTEINE-RICH TRANSMEMBRANE MODULE 4 (71 aa).

Residues 1–12 show a composition bias toward polar residues; that stretch reads MSQYSQNQSSGA. The interval 1–31 is disordered; it reads MSQYSQNQSSGAYPTPPVSTGPYMTPPPLGY. Over residues 14 to 30 the composition is skewed to pro residues; it reads PTPPVSTGPYMTPPPLG. A helical membrane pass occupies residues 48–64; sequence SKGDGFLKGCLAAMCCC.

It belongs to the CYSTM1 family. As to quaternary structure, heterodimers. Interacts with CYSTM6, CYSTM7, CYSTM12 and WIH1/CYSTM13. As to expression, mostly expressed in roots, stems, rosette leaves and siliques and, to a lower extent, in flowers and cauline leaves.

It localises to the cell membrane. Its subcellular location is the cytoplasm. Functionally, involved in resistance to abiotic stress. This Arabidopsis thaliana (Mouse-ear cress) protein is Protein CYSTEINE-RICH TRANSMEMBRANE MODULE 4.